A 359-amino-acid chain; its full sequence is Type-1 angiotensin II receptor (359 aa).

Residues 1–25 (MILNSSTEDGIKRIQDDCPKAGRHN) are Extracellular-facing. Asn-4 carries an N-linked (GlcNAc...) asparagine glycan. Positions 15 and 17 each coordinate angiotensin II. Disulfide bonds link Cys-18-Cys-274 and Cys-101-Cys-180. Residues 26–55 (YIFVMIPTLYSIIFVVGIFGNSLVVIVIYF) form a helical membrane-spanning segment. Residues 56 to 61 (YMKLKT) are Cytoplasmic-facing. A helical membrane pass occupies residues 62–89 (VASVFLLNLALADLCFLLTLPLWAVYTA). Residues 90–98 (MEYRWPFGN) are Extracellular-facing. Residues 99-125 (YLCKIASASVSFNLYASVFLLTCLSID) traverse the membrane as a helical segment. At 126 to 141 (RYLAIVHPMKSRLRRT) the chain is on the cytoplasmic side. Residues 142–165 (MLVAKVTCIIIWLLAGLASLPAII) traverse the membrane as a helical segment. Topologically, residues 166–190 (HRNVFFIENTNITVCAFHYESQNST) are extracellular. Arg-167 contacts angiotensin II. Asn-176 is a glycosylation site (N-linked (GlcNAc...) asparagine). The angiotensin II site is built by Phe-182, His-183, and Tyr-184. An N-linked (GlcNAc...) asparagine glycan is attached at Asn-188. Residues 191 to 216 (LPIGLGLTKNILGFLFPFLIILTSYT) form a helical membrane-spanning segment. Angiotensin II is bound at residue Lys-199. Residues 217–239 (LIWKALKKAYEIQKNKPRNDDIF) are Cytoplasmic-facing. The helical transmembrane segment at 240–268 (KIIMAIVLFFFFSWIPHQIFTFLDVLIQL) threads the bilayer. Topologically, residues 269-278 (GIIRDCRIAD) are extracellular. Residues 279–304 (IVDTAMPITICIAYFNNCLNPLFYGF) traverse the membrane as a helical segment. Residues 305–359 (LGKKFKKYFLQLLKYIPPKAKSHSNLSTKMSTLSYRPSDNVSSSTKKPAPCFEVE) lie on the Cytoplasmic side of the membrane. Over residues 335 to 350 (STLSYRPSDNVSSSTK) the composition is skewed to polar residues. The disordered stretch occupies residues 335-359 (STLSYRPSDNVSSSTKKPAPCFEVE). A lipid anchor (S-palmitoyl cysteine) is attached at Cys-355.

This sequence belongs to the G-protein coupled receptor 1 family. As to quaternary structure, interacts with MAS1. Interacts with ARRB1. Interacts with FLNA (via filamin repeat 21); increases PKA-mediated phosphorylation of FLNA. C-terminal Ser or Thr residues may be phosphorylated.

It localises to the cell membrane. Receptor for angiotensin II, a vasoconstricting peptide, which acts as a key regulator of blood pressure and sodium retention by the kidney. The activated receptor in turn couples to G-alpha proteins G(q) (GNAQ, GNA11, GNA14 or GNA15) and thus activates phospholipase C and increases the cytosolic Ca(2+) concentrations, which in turn triggers cellular responses such as stimulation of protein kinase C. This Pan troglodytes (Chimpanzee) protein is Type-1 angiotensin II receptor (AGTR1).